A 163-amino-acid polypeptide reads, in one-letter code: Phosphopantetheine adenylyltransferase (163 aa).

Substrate is bound at residue Ser-9. Residues 9–10 and His-17 contribute to the ATP site; that span reads SF. Positions 41, 75, and 89 each coordinate substrate. Residues 90 to 92, Glu-100, and 125 to 131 each bind ATP; these read GIR and HLYVRSD.

The protein belongs to the bacterial CoaD family. As to quaternary structure, homohexamer. Mg(2+) serves as cofactor.

It localises to the cytoplasm. It carries out the reaction (R)-4'-phosphopantetheine + ATP + H(+) = 3'-dephospho-CoA + diphosphate. It functions in the pathway cofactor biosynthesis; coenzyme A biosynthesis; CoA from (R)-pantothenate: step 4/5. Functionally, reversibly transfers an adenylyl group from ATP to 4'-phosphopantetheine, yielding dephospho-CoA (dPCoA) and pyrophosphate. The polypeptide is Phosphopantetheine adenylyltransferase (Borreliella burgdorferi (strain ZS7) (Borrelia burgdorferi)).